The primary structure comprises 349 residues: Small ribosomal subunit protein eS6 (349 aa).

The segment at 224-349 is disordered; sequence RRRSRLSSMR…AKKEKKQKKK (126 aa). Basic and acidic residues-rich tracts occupy residues 231 to 251 and 260 to 334; these read SMRD…EKAA and KKEA…EAAK.

It belongs to the eukaryotic ribosomal protein eS6 family. Component of the small ribosomal subunit. Part of the small subunit (SSU) processome, composed of more than 70 proteins and the RNA chaperone small nucleolar RNA (snoRNA) U3. Ribosomal protein S6 is the major substrate of protein kinases in eukaryote ribosomes.

It localises to the cytoplasm. The protein localises to the nucleus. The protein resides in the nucleolus. Functionally, component of the 40S small ribosomal subunit. Plays an important role in controlling cell growth and proliferation through the selective translation of particular classes of mRNA. Part of the small subunit (SSU) processome, first precursor of the small eukaryotic ribosomal subunit. During the assembly of the SSU processome in the nucleolus, many ribosome biogenesis factors, an RNA chaperone and ribosomal proteins associate with the nascent pre-rRNA and work in concert to generate RNA folding, modifications, rearrangements and cleavage as well as targeted degradation of pre-ribosomal RNA by the RNA exosome. This is Small ribosomal subunit protein eS6 (RpS6) from Aedes albopictus (Asian tiger mosquito).